The following is a 161-amino-acid chain: Lipoprotein signal peptidase (161 aa).

Helical transmembrane passes span 8-28, 40-60, 67-87, and 91-111; these read LKYF…KYLA, ITSF…SLLS, QMIM…YLII, and ITEK…LGNF. Catalysis depends on residues Asp-122 and Asp-140. A helical transmembrane segment spans residues 136–156; the sequence is FNIADSAITCGVVILIAASLF.

The protein belongs to the peptidase A8 family.

It localises to the cell inner membrane. It carries out the reaction Release of signal peptides from bacterial membrane prolipoproteins. Hydrolyzes -Xaa-Yaa-Zaa-|-(S,diacylglyceryl)Cys-, in which Xaa is hydrophobic (preferably Leu), and Yaa (Ala or Ser) and Zaa (Gly or Ala) have small, neutral side chains.. Its pathway is protein modification; lipoprotein biosynthesis (signal peptide cleavage). Its function is as follows. This protein specifically catalyzes the removal of signal peptides from prolipoproteins. In Francisella tularensis subsp. novicida (strain U112), this protein is Lipoprotein signal peptidase.